Reading from the N-terminus, the 100-residue chain is NADH-quinone oxidoreductase subunit K (100 aa).

3 helical membrane passes run 3-23, 29-49, and 63-83; these read PTAYYVALSGLLFAIGMIGVL, IMIFLSVELMLNAANLALVAF, and FIVMTLAAAEVAIGLAIIVAI.

This sequence belongs to the complex I subunit 4L family. NDH-1 is composed of 15 different subunits. Subunits NuoA, H, J, K, L, M, N constitute the membrane sector of the complex.

The protein resides in the cell membrane. The enzyme catalyses a quinone + NADH + 5 H(+)(in) = a quinol + NAD(+) + 4 H(+)(out). Its function is as follows. NDH-1 shuttles electrons from NADH, via FMN and iron-sulfur (Fe-S) centers, to quinones in the respiratory chain. The immediate electron acceptor for the enzyme in this species is believed to be a menaquinone. Couples the redox reaction to proton translocation (for every two electrons transferred, four hydrogen ions are translocated across the cytoplasmic membrane), and thus conserves the redox energy in a proton gradient. In Deinococcus geothermalis (strain DSM 11300 / CIP 105573 / AG-3a), this protein is NADH-quinone oxidoreductase subunit K.